Reading from the N-terminus, the 243-residue chain is DNA repair protein RecO (243 aa).

The protein belongs to the RecO family.

Its function is as follows. Involved in DNA repair and RecF pathway recombination. The chain is DNA repair protein RecO from Azoarcus sp. (strain BH72).